A 1122-amino-acid polypeptide reads, in one-letter code: Histone deacetylase 5 (1122 aa).

The interval 1–24 (MNSPNESDGMSGREPSLEILPRTS) is disordered. Residue K35 forms a Glycyl lysine isopeptide (Lys-Gly) (interchain with G-Cter in SUMO2) linkage. 2 disordered regions span residues 41–60 (AMPS…VELR) and 196–281 (KEPT…SSPL). Over residues 247–258 (DSRDDFPLRKTA) the composition is skewed to basic and acidic residues. S259 carries the post-translational modification Phosphoserine; by AMPK, CaMK1, SIK1 and PKD/PRKD1. Basic and acidic residues predominate over residues 272-281 (KVAERRSSPL). At T292 the chain carries Phosphothreonine; by PKC. 2 disordered regions span residues 302–343 (GAGP…NIPT) and 481–504 (MRTV…LPQS). Residues 312-327 (NSAPGSGPSSPNSSHS) show a composition bias toward low complexity. Residues 328–340 (TIAENGFTGSVPN) are compositionally biased toward polar residues. The span at 494 to 504 (SRTQSSPLPQS) shows a compositional bias: low complexity. S498 is modified (phosphoserine; by AMPK, CaMK1, SIK1 and PKD/PRKD1). Residue K533 is modified to N6-acetyllysine. The segment at 536-625 (TKTGELPRQP…GPDLEEPGAG (90 aa)) is disordered. Residues 581–621 (STQEDLEEEDEEDDGEEEEDCIQVKDEEGESGAEEGPDLEE) show a composition bias toward acidic residues. Phosphoserine occurs at positions 611 and 661. The tract at residues 684 to 1028 (GVVYDTFMLK…VSALLSVELQ (345 aa)) is histone deacetylase. 4 residues coordinate Zn(2+): C696, C698, H704, and C781. H833 is an active-site residue. Residues 1081 to 1122 (EEAETVSAMALLSVGAEQAQAAAAREHSPRPAEEPMEQEPAL) carry the Nuclear export signal motif. The segment at 1097-1122 (EQAQAAAAREHSPRPAEEPMEQEPAL) is disordered. Residues 1104-1113 (AREHSPRPAE) show a composition bias toward basic and acidic residues. S1108 bears the Phosphoserine mark.

This sequence belongs to the histone deacetylase family. HD type 2 subfamily. Interacts with AHRR, BAHD1, BCOR, HDAC7, HDAC9, CTBP1, MEF2C, NCOR2, NRIP1, PHB2 and a 14-3-3 chaperone protein. Interacts with BCL6, DDIT3/CHOP, GRK5, KDM5B and MYOCD. Interacts with EP300 in the presence of TFAP2C. Interacts with ANKRA2. Interacts with CUL7 (as part of the 3M complex); negatively regulated by ANKRA2. Interacts with ZBTB7B; the interaction allows the recruitment of HDAC4 on CD8 loci for deacetylation and possible inhibition of CD8 genes expression. Interacts with RARA. In terms of processing, phosphorylated by AMPK, CaMK1, SIK1 and PRKD1 at Ser-259 and Ser-498. The phosphorylation is required for the export to the cytoplasm and inhibition. Phosphorylated by the PKC kinases PKN1 and PKN2, impairing nuclear import. Phosphorylated by GRK5, leading to nuclear export of HDAC5 and allowing MEF2-mediated transcription. Post-translationally, ubiquitinated. Polyubiquitination however does not lead to its degradation. In terms of tissue distribution, ubiquitous.

The protein resides in the nucleus. It is found in the cytoplasm. The catalysed reaction is N(6)-acetyl-L-lysyl-[histone] + H2O = L-lysyl-[histone] + acetate. Responsible for the deacetylation of lysine residues on the N-terminal part of the core histones (H2A, H2B, H3 and H4). Histone deacetylation gives a tag for epigenetic repression and plays an important role in transcriptional regulation, cell cycle progression and developmental events. Histone deacetylases act via the formation of large multiprotein complexes. Involved in muscle maturation by repressing transcription of myocyte enhancer MEF2C. During muscle differentiation, it shuttles into the cytoplasm, allowing the expression of myocyte enhancer factors. Involved in the MTA1-mediated epigenetic regulation of ESR1 expression in breast cancer. Serves as a corepressor of RARA and causes its deacetylation. In association with RARA, plays a role in the repression of microRNA-10a and thereby in the inflammatory response. This is Histone deacetylase 5 (HDAC5) from Homo sapiens (Human).